Consider the following 113-residue polypeptide: Putative anti-sigma factor antagonist TM_1081 (113 aa).

Residues 1 to 110 (MFPYKIVDDV…DTISEAMEEV (110 aa)) enclose the STAS domain. Serine 55 carries the post-translational modification Phosphoserine.

Belongs to the anti-sigma-factor antagonist family. Post-translationally, phosphorylated on a serine residue.

In the phosphorylated form it could act as an anti-anti-sigma factor that counteracts an anti-sigma factor and thus releases a sigma factor from inhibition. The sequence is that of Putative anti-sigma factor antagonist TM_1081 from Thermotoga maritima (strain ATCC 43589 / DSM 3109 / JCM 10099 / NBRC 100826 / MSB8).